The primary structure comprises 85 residues: Small ribosomal subunit protein uS17 (85 aa).

The protein belongs to the universal ribosomal protein uS17 family. In terms of assembly, part of the 30S ribosomal subunit.

Functionally, one of the primary rRNA binding proteins, it binds specifically to the 5'-end of 16S ribosomal RNA. The protein is Small ribosomal subunit protein uS17 of Lachnospira eligens (strain ATCC 27750 / DSM 3376 / VPI C15-48 / C15-B4) (Eubacterium eligens).